Reading from the N-terminus, the 55-residue chain is ATP synthase F(0) complex subunit 8 (55 aa).

The chain crosses the membrane as a helical span at residues 4 to 24; sequence LNPHPWFSIFITSWLILIIIL.

The protein belongs to the ATPase protein 8 family. Component of the ATP synthase complex composed at least of ATP5F1A/subunit alpha, ATP5F1B/subunit beta, ATP5MC1/subunit c (homooctomer), MT-ATP6/subunit a, MT-ATP8/subunit 8, ATP5ME/subunit e, ATP5MF/subunit f, ATP5MG/subunit g, ATP5MK/subunit k, ATP5MJ/subunit j, ATP5F1C/subunit gamma, ATP5F1D/subunit delta, ATP5F1E/subunit epsilon, ATP5PF/subunit F6, ATP5PB/subunit b, ATP5PD/subunit d, ATP5PO/subunit OSCP. ATP synthase complex consists of a soluble F(1) head domain (subunits alpha(3) and beta(3)) - the catalytic core - and a membrane F(0) domain - the membrane proton channel (subunits c, a, 8, e, f, g, k and j). These two domains are linked by a central stalk (subunits gamma, delta, and epsilon) rotating inside the F1 region and a stationary peripheral stalk (subunits F6, b, d, and OSCP).

The protein resides in the mitochondrion membrane. Subunit 8, of the mitochondrial membrane ATP synthase complex (F(1)F(0) ATP synthase or Complex V) that produces ATP from ADP in the presence of a proton gradient across the membrane which is generated by electron transport complexes of the respiratory chain. ATP synthase complex consist of a soluble F(1) head domain - the catalytic core - and a membrane F(1) domain - the membrane proton channel. These two domains are linked by a central stalk rotating inside the F(1) region and a stationary peripheral stalk. During catalysis, ATP synthesis in the catalytic domain of F(1) is coupled via a rotary mechanism of the central stalk subunits to proton translocation. In vivo, can only synthesize ATP although its ATP hydrolase activity can be activated artificially in vitro. Part of the complex F(0) domain. In Pelomedusa subrufa (African side-necked turtle), this protein is ATP synthase F(0) complex subunit 8.